A 1341-amino-acid polypeptide reads, in one-letter code: Pleckstrin homology domain-containing family G member 3 (1341 aa).

A disordered region spans residues 1-68; sequence MPVSTALHQD…PNSNNNSSGW (68 aa). Over residues 18-29 the composition is skewed to low complexity; that stretch reads SLVSTTSSSGSS. 2 stretches are compositionally biased toward polar residues: residues 42-51 and 59-68; these read SEASAQNGTG and PNSNNNSSGW. A Phosphoserine modification is found at Ser-76. One can recognise a DH domain in the interval 93–272; sequence YLGRVVREIV…TCVAWYINDM (180 aa). One can recognise a PH domain in the interval 296–394; sequence DLTTYGELVL…WTHHIKRLIL (99 aa). Phosphoserine is present on residues Ser-433 and Ser-502. Positions 433–482 are disordered; it reads SQDEVSSHVRQGRRQSEPGHTLFSRATLPSRQQGFEMPGLKGRRKSEPTR. 2 disordered regions span residues 508 to 657 and 684 to 715; these read DFGQ…EFPE and PEGS…LLPP. Acidic residues-rich tracts occupy residues 529–541 and 570–580; these read ELEE…EEEE and GSEEEEEEEES. 7 positions are modified to phosphoserine: Ser-571, Ser-694, Ser-695, Ser-737, Ser-759, Ser-762, and Ser-766. Residues 695-707 show a composition bias toward acidic residues; the sequence is SEEEEEEEMEAAQ. A disordered region spans residues 775–832; it reads SIGDSLSNPPTPEVIIGADMVTDNGPSVNGTESPSAGSGCPTEQDRSSCKKKESALST. Polar residues predominate over residues 798–810; sequence NGPSVNGTESPSA. Positions 817 to 832 are enriched in basic and acidic residues; that stretch reads EQDRSSCKKKESALST. 4 positions are modified to phosphoserine: Ser-862, Ser-899, Ser-900, and Ser-947. Disordered regions lie at residues 876 to 930, 939 to 958, 1071 to 1097, and 1117 to 1162; these read SRFN…EFCP, ERME…SQAN, KVTP…SGGK, and HGTS…PFDT. The span at 939–948 shows a compositional bias: basic and acidic residues; the sequence is ERMESSERSP. Over residues 949–958 the composition is skewed to polar residues; that stretch reads RTGSGQSQAN. Ser-1129, Ser-1134, Ser-1136, Ser-1141, Ser-1155, Ser-1158, and Ser-1201 each carry phosphoserine. Residues 1135 to 1162 show a composition bias toward polar residues; the sequence is FSPSAVSPRTTSPGARSSARSPLSPFDT. 2 disordered regions span residues 1204 to 1249 and 1271 to 1341; these read ENIV…LNGG and KGPH…NSVG. Over residues 1309–1320 the composition is skewed to basic and acidic residues; sequence QPKEHGPRDSAD.

Its subcellular location is the cytoplasm. It is found in the cytoskeleton. Plays a role in controlling cell polarity and cell motility by selectively binding newly polymerized actin and activating RAC1 and CDC42 to enhance local actin polymerization. In Mus musculus (Mouse), this protein is Pleckstrin homology domain-containing family G member 3.